Reading from the N-terminus, the 320-residue chain is Aspartate carbamoyltransferase catalytic subunit (320 aa).

Carbamoyl phosphate-binding residues include R53 and T54. K82 is a binding site for L-aspartate. The carbamoyl phosphate site is built by R103, H131, and Q134. R164 and R227 together coordinate L-aspartate. Carbamoyl phosphate is bound by residues L266 and P267.

It belongs to the aspartate/ornithine carbamoyltransferase superfamily. ATCase family. In terms of assembly, heterododecamer (2C3:3R2) of six catalytic PyrB chains organized as two trimers (C3), and six regulatory PyrI chains organized as three dimers (R2).

It carries out the reaction carbamoyl phosphate + L-aspartate = N-carbamoyl-L-aspartate + phosphate + H(+). It functions in the pathway pyrimidine metabolism; UMP biosynthesis via de novo pathway; (S)-dihydroorotate from bicarbonate: step 2/3. Its function is as follows. Catalyzes the condensation of carbamoyl phosphate and aspartate to form carbamoyl aspartate and inorganic phosphate, the committed step in the de novo pyrimidine nucleotide biosynthesis pathway. This Bifidobacterium longum subsp. infantis (strain ATCC 15697 / DSM 20088 / JCM 1222 / NCTC 11817 / S12) protein is Aspartate carbamoyltransferase catalytic subunit.